A 253-amino-acid chain; its full sequence is tRNA uridine(34) hydroxylase (253 aa).

One can recognise a Rhodanese domain in the interval 127 to 221; it reads HGRPLVLLDT…YFEDVGGEGY (95 aa). Catalysis depends on Cys-181, which acts as the Cysteine persulfide intermediate.

Belongs to the TrhO family.

The enzyme catalyses uridine(34) in tRNA + AH2 + O2 = 5-hydroxyuridine(34) in tRNA + A + H2O. In terms of biological role, catalyzes oxygen-dependent 5-hydroxyuridine (ho5U) modification at position 34 in tRNAs. The polypeptide is tRNA uridine(34) hydroxylase (Xanthomonas campestris pv. campestris (strain B100)).